We begin with the raw amino-acid sequence, 112 residues long: Conotoxin vil14.4 (112 aa).

The first 22 residues, methionine 1 to phenylalanine 22, serve as a signal peptide directing secretion. The propeptide occupies glutamate 23 to arginine 85. 2 disulfide bridges follow: cysteine 91/cysteine 111 and cysteine 95/cysteine 107.

Belongs to the conotoxin R superfamily. Expressed by the venom duct.

The protein localises to the secreted. In Conus villepinii (Villepin's cone), this protein is Conotoxin vil14.4.